The following is a 195-amino-acid chain: uncharacterized protein (195 aa).

In terms of domain architecture, HTH tetR-type spans 10-70; that stretch reads EETVARLLQA…ATAYEVLRRQ (61 aa). Positions 33 to 52 form a DNA-binding region, H-T-H motif; that stretch reads SAAVITKRAGVSVGALFRHF.

This is an uncharacterized protein from Mycobacterium tuberculosis (strain CDC 1551 / Oshkosh).